We begin with the raw amino-acid sequence, 160 residues long: 2-C-methyl-D-erythritol 2,4-cyclodiphosphate synthase (160 aa).

A divalent metal cation contacts are provided by Asp-10 and His-12. 4-CDP-2-C-methyl-D-erythritol 2-phosphate-binding positions include 10–12 and 36–37; these read DVH and HS. His-44 contacts a divalent metal cation. 4-CDP-2-C-methyl-D-erythritol 2-phosphate is bound by residues 58–60, 63–67, and Arg-144; these read DIG and FPDTD.

The protein belongs to the IspF family. In terms of assembly, homotrimer. It depends on a divalent metal cation as a cofactor.

The catalysed reaction is 4-CDP-2-C-methyl-D-erythritol 2-phosphate = 2-C-methyl-D-erythritol 2,4-cyclic diphosphate + CMP. It participates in isoprenoid biosynthesis; isopentenyl diphosphate biosynthesis via DXP pathway; isopentenyl diphosphate from 1-deoxy-D-xylulose 5-phosphate: step 4/6. In terms of biological role, involved in the biosynthesis of isopentenyl diphosphate (IPP) and dimethylallyl diphosphate (DMAPP), two major building blocks of isoprenoid compounds. Catalyzes the conversion of 4-diphosphocytidyl-2-C-methyl-D-erythritol 2-phosphate (CDP-ME2P) to 2-C-methyl-D-erythritol 2,4-cyclodiphosphate (ME-CPP) with a corresponding release of cytidine 5-monophosphate (CMP). The sequence is that of 2-C-methyl-D-erythritol 2,4-cyclodiphosphate synthase from Dechloromonas aromatica (strain RCB).